Consider the following 142-residue polypeptide: Translation initiation factor 2 subunit beta (142 aa).

This sequence belongs to the eIF-2-beta/eIF-5 family. In terms of assembly, heterotrimer composed of an alpha, a beta and a gamma chain.

Functionally, eIF-2 functions in the early steps of protein synthesis by forming a ternary complex with GTP and initiator tRNA. In Staphylothermus marinus (strain ATCC 43588 / DSM 3639 / JCM 9404 / F1), this protein is Translation initiation factor 2 subunit beta.